The chain runs to 150 residues: UPF0756 membrane protein HAPS_1649 (150 aa).

Helical transmembrane passes span 1–21 (MSLQ…LGIF), 27–46 (VTIS…SKYV), 52–72 (YGIK…LVSG), 82–102 (LINW…WLGG), and 123–143 (IIGV…AGIL).

Belongs to the UPF0756 family.

The protein resides in the cell membrane. This is UPF0756 membrane protein HAPS_1649 from Glaesserella parasuis serovar 5 (strain SH0165) (Haemophilus parasuis).